The following is a 757-amino-acid chain: 5-methyltetrahydropteroyltriglutamate--homocysteine methyltransferase (757 aa).

5-methyltetrahydropteroyltri-L-glutamate-binding positions include 17 to 20 (RELK) and Lys115. L-homocysteine is bound by residues 430-432 (IGS) and Glu483. L-methionine is bound by residues 430–432 (IGS) and Glu483. Residues 514–515 (RC) and Trp560 contribute to the 5-methyltetrahydropteroyltri-L-glutamate site. Asp598 serves as a coordination point for L-homocysteine. Asp598 serves as a coordination point for L-methionine. Residue Glu604 participates in 5-methyltetrahydropteroyltri-L-glutamate binding. The Zn(2+) site is built by His640, Cys642, and Glu664. Catalysis depends on His693, which acts as the Proton donor. Cys725 provides a ligand contact to Zn(2+).

This sequence belongs to the vitamin-B12 independent methionine synthase family. Zn(2+) serves as cofactor.

It catalyses the reaction 5-methyltetrahydropteroyltri-L-glutamate + L-homocysteine = tetrahydropteroyltri-L-glutamate + L-methionine. Its pathway is amino-acid biosynthesis; L-methionine biosynthesis via de novo pathway; L-methionine from L-homocysteine (MetE route): step 1/1. In terms of biological role, catalyzes the transfer of a methyl group from 5-methyltetrahydrofolate to homocysteine resulting in methionine formation. In Buchnera aphidicola subsp. Schizaphis graminum (strain Sg), this protein is 5-methyltetrahydropteroyltriglutamate--homocysteine methyltransferase.